Reading from the N-terminus, the 330-residue chain is Phospho-N-acetylmuramoyl-pentapeptide-transferase (330 aa).

10 helical membrane passes run 3-23 (SVVL…SSFI), 49-69 (TPTM…AVVA), 71-91 (PNPA…VGLY), 111-131 (FLLL…YVGV), 145-165 (VLGP…FVIV), 179-199 (GLAA…AFLE), 204-224 (LAII…YNSH), 228-248 (IFMG…AAIL), 256-276 (PVIG…VVVF), and 307-327 (FWIV…FFLY).

The protein belongs to the glycosyltransferase 4 family. MraY subfamily. Mg(2+) is required as a cofactor.

The protein localises to the cell membrane. It carries out the reaction UDP-N-acetyl-alpha-D-muramoyl-L-alanyl-gamma-D-glutamyl-meso-2,6-diaminopimeloyl-D-alanyl-D-alanine + di-trans,octa-cis-undecaprenyl phosphate = di-trans,octa-cis-undecaprenyl diphospho-N-acetyl-alpha-D-muramoyl-L-alanyl-D-glutamyl-meso-2,6-diaminopimeloyl-D-alanyl-D-alanine + UMP. It participates in cell wall biogenesis; peptidoglycan biosynthesis. Its function is as follows. Catalyzes the initial step of the lipid cycle reactions in the biosynthesis of the cell wall peptidoglycan: transfers peptidoglycan precursor phospho-MurNAc-pentapeptide from UDP-MurNAc-pentapeptide onto the lipid carrier undecaprenyl phosphate, yielding undecaprenyl-pyrophosphoryl-MurNAc-pentapeptide, known as lipid I. This Rubrobacter xylanophilus (strain DSM 9941 / JCM 11954 / NBRC 16129 / PRD-1) protein is Phospho-N-acetylmuramoyl-pentapeptide-transferase.